Reading from the N-terminus, the 236-residue chain is Small ribosomal subunit protein eS6 (236 aa).

A phosphoserine mark is found at Ser-232 and Ser-233.

Belongs to the eukaryotic ribosomal protein eS6 family. In terms of processing, phosphorylated.

This Debaryomyces hansenii (strain ATCC 36239 / CBS 767 / BCRC 21394 / JCM 1990 / NBRC 0083 / IGC 2968) (Yeast) protein is Small ribosomal subunit protein eS6 (RPS6).